The following is a 280-amino-acid chain: 2-dehydro-3-deoxyphosphooctonate aldolase (280 aa).

Belongs to the KdsA family.

Its subcellular location is the cytoplasm. The enzyme catalyses D-arabinose 5-phosphate + phosphoenolpyruvate + H2O = 3-deoxy-alpha-D-manno-2-octulosonate-8-phosphate + phosphate. Its pathway is carbohydrate biosynthesis; 3-deoxy-D-manno-octulosonate biosynthesis; 3-deoxy-D-manno-octulosonate from D-ribulose 5-phosphate: step 2/3. It functions in the pathway bacterial outer membrane biogenesis; lipopolysaccharide biosynthesis. The sequence is that of 2-dehydro-3-deoxyphosphooctonate aldolase from Neisseria meningitidis serogroup C / serotype 2a (strain ATCC 700532 / DSM 15464 / FAM18).